Reading from the N-terminus, the 382-residue chain is O-antigen polymerase (382 aa).

Residues 1-3 are Cytoplasmic-facing; that stretch reads MNN. Residues 4–22 traverse the membrane as a helical segment; the sequence is INKIFITFLCIELIIGGGG. Residues 23–34 are Periplasmic-facing; it reads RLLEPLGIFPLR. A helical membrane pass occupies residues 35–54; that stretch reads YLLFVFSFILLIFNLVTFNF. At 55-62 the chain is on the cytoplasmic side; sequence SITQKCVS. A helical membrane pass occupies residues 63 to 81; sequence LFIWLLLFPFYGFFVGLLA. The Periplasmic portion of the chain corresponds to 82–94; sequence GNKINDILFDVQP. Residues 95 to 112 form a helical membrane-spanning segment; the sequence is YLFMLSLIYLFTLRYTLK. Residues 113 to 125 lie on the Cytoplasmic side of the membrane; the sequence is VFSCEIFIKIVNA. The chain crosses the membrane as a helical span at residues 126-146; that stretch reads FALYGSLLYISYIILLNFGLL. The Periplasmic portion of the chain corresponds to 147 to 167; the sequence is NFNLIYEHLSLTSEFFFRPDG. Residues 168–187 form a helical membrane-spanning segment; the sequence is AFFSKSFYFFGVGAIISFVD. Topologically, residues 188 to 189 are cytoplasmic; the sequence is KK. A helical transmembrane segment spans residues 190–206; that stretch reads YLKCLIIVLAILLTESR. Over 207 to 208 the chain is Periplasmic; the sequence is GV. A helical membrane pass occupies residues 209-226; that stretch reads LLFTTLSLLLASFKLHKL. Residues 227–229 are Cytoplasmic-facing; sequence YLN. Residues 230 to 247 form a helical membrane-spanning segment; the sequence is TIIIILGSVLFIIMLYMV. The Periplasmic segment spans residues 248 to 300; that stretch reads GSRSEDSDSVRFNDLYFYYKNVDLATFLFGRGFGSFILDRLRIEIVPLEILQK. Residues 301–318 form a helical membrane-spanning segment; that stretch reads TGVIGVFISLVPMLLIFL. Residues 319–329 lie on the Cytoplasmic side of the membrane; the sequence is KGYFLNSTKTS. Residues 330–349 form a helical membrane-spanning segment; it reads LMMSLILFFSITVSITNPFL. Residues 350-352 are Periplasmic-facing; that stretch reads FTP. Residues 353–370 traverse the membrane as a helical segment; it reads MGIFIIGVVVLWVFSIEN. At 371–382 the chain is on the cytoplasmic side; that stretch reads IQISNNLTSGAK.

It is found in the cell inner membrane. It catalyses the reaction n lipid-linked O-antigen repeat units = a lipid-linked O antigen + (n-1) polyisoprenyl diphosphate.. It participates in bacterial outer membrane biogenesis; LPS O-antigen biosynthesis. Functionally, polymerase involved in the biosynthesis of the lipopolysaccharide (LPS). Catalyzes the polymerization of the O-antigen repeat units on the periplasmic face of the inner membrane, leading to the formation of the lipid-linked O-antigen molecule. This is O-antigen polymerase from Shigella flexneri.